The sequence spans 540 residues: Extracellular matrix protein 1 (540 aa).

The first 19 residues, 1–19, serve as a signal peptide directing secretion; sequence MGTTARAALVLTYLAVASA. Disordered stretches follow at residues 41-85 and 120-175; these read VGYA…EATP and LQHP…PSPD. Composition is skewed to polar residues over residues 71-85 and 146-156; these read GQSQ…EATP and NAAQHCQQDRS. 2 repeat units span residues 150–279 and 283–405. Positions 150–405 are 2 X approximate repeats; it reads HCQQDRSQGG…FARRAPYPNY (256 aa). A glycan (N-linked (GlcNAc...) asparagine) is linked at asparagine 354. Asparagine 444 carries N-linked (GlcNAc...) (complex) asparagine glycosylation. The tract at residues 515 to 540 is disordered; that stretch reads ENAKGQGEQGSTGGTNISSTSEPKEE. Low complexity predominate over residues 528–540; that stretch reads GTNISSTSEPKEE. N-linked (GlcNAc...) asparagine glycosylation occurs at asparagine 530.

In terms of assembly, interacts (via C-terminus) with HSPG2 (via C-terminus). Interacts with EFEMP1/FBLN3 and LAMB3. Interacts with MMP9. As to expression, expressed in breast cancer tissues. Little or no expression observed in normal breast tissues. Expressed in skin; wide expression is observed throughout the dermis with minimal expression in the epidermis.

It localises to the secreted. The protein localises to the extracellular space. The protein resides in the extracellular matrix. Its function is as follows. Involved in endochondral bone formation as negative regulator of bone mineralization. Stimulates the proliferation of endothelial cells and promotes angiogenesis. Inhibits MMP9 proteolytic activity. This is Extracellular matrix protein 1 (ECM1) from Homo sapiens (Human).